Consider the following 356-residue polypeptide: Histidinol-phosphate aminotransferase (356 aa).

Lys214 bears the N6-(pyridoxal phosphate)lysine mark.

The protein belongs to the class-II pyridoxal-phosphate-dependent aminotransferase family. Histidinol-phosphate aminotransferase subfamily. As to quaternary structure, homodimer. Requires pyridoxal 5'-phosphate as cofactor.

The catalysed reaction is L-histidinol phosphate + 2-oxoglutarate = 3-(imidazol-4-yl)-2-oxopropyl phosphate + L-glutamate. The protein operates within amino-acid biosynthesis; L-histidine biosynthesis; L-histidine from 5-phospho-alpha-D-ribose 1-diphosphate: step 7/9. The protein is Histidinol-phosphate aminotransferase of Escherichia coli O6:K15:H31 (strain 536 / UPEC).